An 885-amino-acid polypeptide reads, in one-letter code: Cadherin-1 (885 aa).

The first 26 residues, Met1–Cys26, serve as a signal peptide directing secretion. Positions Gln27–Arg156 are excised as a propeptide. The span at Lys121–His131 shows a compositional bias: basic residues. The interval Lys121–Val141 is disordered. Residues Asp157 to Ala712 are Extracellular-facing. Cadherin domains are found at residues Trp158–Phe264, Thr265–Phe377, Asn378–Phe488, Ile489–Pro597, and Lys607–Cys688. Asp259 provides a ligand contact to Ca(2+). The O-linked (Man...) serine glycan is linked to Ser282. A glycan (O-linked (Man...) threonine) is linked at Thr287. Ca(2+) is bound at residue Asp290. 4 O-linked (Man...) threonine glycosylation sites follow: Thr360, Thr472, Thr474, and Thr511. Residue Asn560 is glycosylated (N-linked (GlcNAc...) asparagine). Thr578, Thr580, and Thr582 each carry an O-linked (Man...) threonine glycan. Asn639 carries N-linked (GlcNAc...) asparagine glycosylation. The chain crosses the membrane as a helical span at residues Ile713 to Phe733. Topologically, residues Val734–Asp885 are cytoplasmic. A disordered region spans residues Asp750 to Phe770. A phosphotyrosine; by SRC mark is found at Tyr756, Tyr757, and Tyr758. A compositionally biased stretch (acidic residues) spans Tyr758 to Phe770. Positions Glu761–Leu772 are required for binding CTNND1 and PSEN1. Phosphoserine occurs at positions 773, 796, 841, 843, and 849. A disordered region spans residues Pro792–Gly811. The interval Ile814–Asp885 is required for binding alpha, beta and gamma catenins.

In terms of assembly, homodimer; disulfide-linked. Component of an E-cadherin/ catenin adhesion complex composed of at least E-cadherin/CDH1, beta-catenin/CTNNB1 or gamma-catenin/JUP, and potentially alpha-catenin/CTNNA1; the complex is located to adherens junctions. Found in a complex composed of CDH1, RAP1A and PKP3; PKP3 acts as a scaffold protein within the complex, the complex is required for CDH1 localization to mature desmosome cell junctions. Interacts with the TRPV4 and CTNNB1 complex. Interacts with CTNND1. The stable association of CTNNA1 is controversial as CTNNA1 was shown not to bind to F-actin when assembled in the complex. Alternatively, the CTNNA1-containing complex may be linked to F-actin by other proteins such as LIMA1. Interaction with PSEN1, cleaves CDH1 resulting in the disassociation of cadherin-based adherens junctions (CAJs). Interacts with AJAP1 and DLGAP5. Interacts with TBC1D2. Interacts with LIMA1. Interacts with CAV1. Interacts with PIP5K1C. Interacts with RAB8B. Interacts with DDR1; this stabilizes CDH1 at the cell surface and inhibits its internalization. Interacts with RAPGEF2. Interacts with KLRG1. Forms a ternary complex composed of ADAM10, CADH1 and EPHA4; within the complex, CADH1 is cleaved by ADAM10 which disrupts adherens junctions. Interacts with SPEF1. Interacts with CTNNB1 and PKP2. Interacts with AMOTL2; the interaction may facilitate binding of radial actin fibers to cell junction complexes. Interacts with DSG3; the interaction is required for CDH1 localization to developing adherens junctions. In terms of processing, during apoptosis or with calcium influx, cleaved by a membrane-bound metalloproteinase (ADAM10), PS1/gamma-secretase and caspase-3. Processing by the metalloproteinase, induced by calcium influx, causes disruption of cell-cell adhesion and the subsequent release of beta-catenin into the cytoplasm. The residual membrane-tethered cleavage product is rapidly degraded via an intracellular proteolytic pathway. Cleavage by caspase-3 releases the cytoplasmic tail resulting in disintegration of the actin microfilament system. The gamma-secretase-mediated cleavage promotes disassembly of adherens junctions. During development of the cochlear organ of Corti, cleavage by ADAM10 at adherens junctions promotes pillar cell separation. N-glycosylation at Asn-639 is essential for expression, folding and trafficking. Addition of bisecting N-acetylglucosamine by MGAT3 modulates its cell membrane location. Post-translationally, ubiquitinated by a SCF complex containing SKP2, which requires prior phosphorylation by CK1/CSNK1A1. Ubiquitinated by CBLL1/HAKAI, requires prior phosphorylation at Tyr-757. In terms of processing, O-glycosylated. O-manosylated by TMTC1, TMTC2, TMTC3 or TMTC4. Thr-287 and Thr-511 are O-mannosylated by TMTC2 or TMTC4 but not TMTC1 or TMTC3.

Its subcellular location is the cell junction. It localises to the adherens junction. The protein localises to the cell membrane. The protein resides in the endosome. It is found in the golgi apparatus. Its subcellular location is the trans-Golgi network. It localises to the cytoplasm. The protein localises to the desmosome. Its function is as follows. Cadherins are calcium-dependent cell adhesion proteins. They preferentially interact with themselves in a homophilic manner in connecting cells; cadherins may thus contribute to the sorting of heterogeneous cell types. CDH1 is involved in mechanisms regulating cell-cell adhesions, mobility and proliferation of epithelial cells. Promotes organization of radial actin fiber structure and cellular response to contractile forces, via its interaction with AMOTL2 which facilitates anchoring of radial actin fibers to CDH1 junction complexes at the cell membrane. Plays a role in the early stages of desmosome cell-cell junction formation via facilitating the recruitment of DSG2 and DSP to desmosome plaques. Has a potent invasive suppressor role. It is a ligand for integrin alpha-E/beta-7. Functionally, E-Cad/CTF2 promotes non-amyloidogenic degradation of Abeta precursors. Has a strong inhibitory effect on APP C99 and C83 production. The chain is Cadherin-1 (CDH1) from Canis lupus familiaris (Dog).